We begin with the raw amino-acid sequence, 511 residues long: Glutamate/gamma-aminobutyrate antiporter (511 aa).

At 1 to 13 (MATSVQTGKAKQL) the chain is on the cytoplasmic side. The chain crosses the membrane as a helical span at residues 14–36 (TLLGFFAITASMVMAVYEYPTFA). The Periplasmic portion of the chain corresponds to 37 to 40 (TSGF). A helical transmembrane segment spans residues 41–64 (SLVFFLLLGGILWFIPVGLCAAEM). The Cytoplasmic portion of the chain corresponds to 65–85 (ATVDGWEEGGVFAWVSNTLGP). Residues 86–112 (RWGFAAISFGYLQIAIGFIPMLYFVLG) form a helical membrane-spanning segment. Residues 113-126 (ALSYILKWPALNED) lie on the Periplasmic side of the membrane. A helical transmembrane segment spans residues 127 to 147 (PITKTIAALIILWALALTQFG). The Cytoplasmic segment spans residues 148 to 151 (GTKY). Residues 152 to 180 (TARIAKVGFFAGILLPAFILIALAAIYLH) traverse the membrane as a helical segment. The Periplasmic segment spans residues 181 to 201 (SGAPVAIEMDSKTFFPDFSKV). The chain crosses the membrane as a helical span at residues 202–225 (GTLVVFVAFILSYMGVEASATHVN). Residues 226–229 (EMSN) lie on the Cytoplasmic side of the membrane. A helical transmembrane segment spans residues 230–259 (PGRDYPLAMLLLMVAAICLSSVGGLSIAMV). Residues 260–288 (IPGNEINLSAGVMQTFTVLMSHVAPEIEW) lie on the Periplasmic side of the membrane. A helical membrane pass occupies residues 289 to 322 (TVRVISALLLLGVLAEIASWIVGPSRGMYVTAQK). The Cytoplasmic segment spans residues 323 to 337 (NLLPAAFAKMNKNGV). Residues 338 to 359 (PVTLVISQLVITSIALIILTNT) form a helical membrane-spanning segment. At 360 to 362 (GGG) the chain is on the periplasmic side. The helical transmembrane segment at 363–396 (NNMSFLIALALTVVIYLCAYFMLFIGYIVLVLKH) threads the bilayer. The Cytoplasmic portion of the chain corresponds to 397–409 (PDLKRTFNIPGGK). Residues 410 to 430 (GVKLVVAIVGLLTSIMAFIVS) traverse the membrane as a helical segment. Residues 431-443 (FLPPDNIQGDSTD) lie on the Periplasmic side of the membrane. Residues 444-467 (MYVELLVVSFLVVLALPFILYAVH) form a helical membrane-spanning segment. Topologically, residues 468–511 (DRKGKANTGVTLEPINSQNAPKGHFFLHPRARSPHYIVMNDKKH) are cytoplasmic.

The protein belongs to the amino acid-polyamine-organocation (APC) superfamily. Glutamate:GABA antiporter (GGA) (TC 2.A.3.7) family. As to quaternary structure, monomer.

The protein resides in the cell inner membrane. It catalyses the reaction 4-aminobutanoate(in) + L-glutamate(out) = 4-aminobutanoate(out) + L-glutamate(in). Its activity is regulated as follows. Shows pH-dependent activity. The Glu/GABA transport activity is robust at pH 4.5 and rapidly decreases with increasing pH, with no detectable activity at pH 6.5 or above. The Glu analog L-trans-pyrrolidine-2,4-dicarboxylic acid (L-PDC) blocks the uptake of glutamate by selective inhibition. Its function is as follows. Involved in glutaminase-dependent acid resistance. Exchanges extracellular glutamate (Glu) for intracellular gamma-aminobutyric acid (GABA) under acidic conditions. The protonation states of substrates are crucial for transport. Selectively transports Glu with no net charge and GABA with a positive charge. Also efficiently transports glutamine and, to a smaller extent, methionine and leucine. When the extracellular pH drops below 2.5, can import L-glutamine and export either glutamate or GABA. The ability to survive the extremely acidic conditions of the stomach is essential for successful colonization of the host by commensal and pathogenic bacteria. The sequence is that of Glutamate/gamma-aminobutyrate antiporter from Escherichia coli (strain K12).